Here is a 565-residue protein sequence, read N- to C-terminus: Sulfite reductase [NADPH] hemoprotein beta-component (565 aa).

Residues C429, C435, C474, and C478 each contribute to the [4Fe-4S] cluster site. Residue C478 coordinates siroheme.

It belongs to the nitrite and sulfite reductase 4Fe-4S domain family. Alpha(8)-beta(8). The alpha component is a flavoprotein, the beta component is a hemoprotein. Siroheme is required as a cofactor. Requires [4Fe-4S] cluster as cofactor.

The enzyme catalyses hydrogen sulfide + 3 NADP(+) + 3 H2O = sulfite + 3 NADPH + 4 H(+). The protein operates within sulfur metabolism; hydrogen sulfide biosynthesis; hydrogen sulfide from sulfite (NADPH route): step 1/1. Its function is as follows. Component of the sulfite reductase complex that catalyzes the 6-electron reduction of sulfite to sulfide. This is one of several activities required for the biosynthesis of L-cysteine from sulfate. The protein is Sulfite reductase [NADPH] hemoprotein beta-component of Shewanella sp. (strain MR-4).